Reading from the N-terminus, the 537-residue chain is MEPGSKLSEDETFSQTFNEEEQEDSRNKDILAFDPSVDNEPLLTKKLSSLSIYSEPSPDEASNLQELKFVSSPPSVRVPRSRRNRRNSRVDSEARKRQFDRVKHSVSNSCKLHLSLQGQEAAQLRSDSLYLEASDKRDLTSLVTRVKELARKLSAARLAFRFRKVLLICNDNKESIERSVELAQWLLDTFSFTPSSSHNNMASSNTQSNTQLSEMESEEKSFNKDVYPNDEYTPFTPKNQFVIYLEDTLASLDVVESLSPKKNVRFWTSELCTQCPNLFDCVITVGDDSAALRASWLFQDVVPPVLSFSTAKAGFLSILPIAEYTKTLDLIFHRGFTVNLRMRFQCSIMRYVGEHSTHICEGQYSVLNELLIDRGPNPFMISLDLYVENEYITTLQSDGVCVSTPTGSTAYSVAAGGSLCHPGIPAILISAICPHSLSFRPIILPDSMTLRIVVPLDARSNAWCAFDGHHRIELGLGDYISISASSFPFPSVIRSKYSKDWFDILRQTLNWNDRKGRQRSSRYKSHVHKTNTSEEQN.

Disordered regions lie at residues 1 to 33 (MEPG…ILAF), 71 to 98 (SSPP…RKRQ), 197 to 220 (SHNN…SEEK), and 516 to 537 (GRQR…EEQN). A Phosphoserine modification is found at S72. Residues 88–98 (SRVDSEARKRQ) are compositionally biased toward basic and acidic residues. Polar residues predominate over residues 197–214 (SHNNMASSNTQSNTQLSE). Basic residues predominate over residues 516–529 (GRQRSSRYKSHVHK).

It belongs to the NAD kinase family.

This is an uncharacterized protein from Schizosaccharomyces pombe (strain 972 / ATCC 24843) (Fission yeast).